A 308-amino-acid chain; its full sequence is GATA transcription factor 10 (308 aa).

Residues 214-268 (DGIVRICTHCETITTPQWRQGPSGPKTLCNACGVRFKSGRLVPEYRPASSPTFIP) form a GATA-type zinc finger.

This sequence belongs to the type IV zinc-finger family. Class A subfamily.

It is found in the nucleus. In terms of biological role, transcriptional activator that specifically binds 5'-GATA-3' or 5'-GAT-3' motifs within gene promoters. May be involved in the regulation of some light-responsive genes. This is GATA transcription factor 10 (GATA10) from Arabidopsis thaliana (Mouse-ear cress).